Here is a 391-residue protein sequence, read N- to C-terminus: Probable protein phosphatase 2C 32 (391 aa).

Residues 1 to 53 form a disordered region; it reads MSCTVAIPSSPVFSPSRRPLSCKAASASASPESVSVAASSPAQAAPPAGSPLR. Over residues 8-51 the composition is skewed to low complexity; the sequence is PSSPVFSPSRRPLSCKAASASASPESVSVAASSPAQAAPPAGSP. The helical transmembrane segment at 95–115 threads the bilayer; the sequence is LVVPVCGGAAAAAAAAAVAAV. The 258-residue stretch at 129–386 folds into the PPM-type phosphatase domain; it reads EFAVYCRRGK…DDISIVIIQL (258 aa). Positions 168, 169, 332, and 377 each coordinate Mn(2+).

The protein belongs to the PP2C family. Requires Mg(2+) as cofactor. Mn(2+) serves as cofactor.

The protein resides in the membrane. It carries out the reaction O-phospho-L-seryl-[protein] + H2O = L-seryl-[protein] + phosphate. It catalyses the reaction O-phospho-L-threonyl-[protein] + H2O = L-threonyl-[protein] + phosphate. The polypeptide is Probable protein phosphatase 2C 32 (Oryza sativa subsp. japonica (Rice)).